Consider the following 346-residue polypeptide: Alkanal monooxygenase alpha chain (346 aa).

In terms of assembly, heterodimer of an alpha and a beta chain.

It catalyses the reaction a long-chain fatty aldehyde + FMNH2 + O2 = a long-chain fatty acid + hnu + FMN + H2O + 2 H(+). In terms of biological role, light-emitting reaction in luminous bacteria. This chain is Alkanal monooxygenase alpha chain (luxA), found in Photobacterium phosphoreum.